Consider the following 157-residue polypeptide: Ribosome maturation factor RimP (157 aa).

Belongs to the RimP family.

The protein resides in the cytoplasm. Functionally, required for maturation of 30S ribosomal subunits. In Geobacillus sp. (strain WCH70), this protein is Ribosome maturation factor RimP.